The sequence spans 118 residues: Large ribosomal subunit protein bL20 (118 aa).

Belongs to the bacterial ribosomal protein bL20 family.

Functionally, binds directly to 23S ribosomal RNA and is necessary for the in vitro assembly process of the 50S ribosomal subunit. It is not involved in the protein synthesizing functions of that subunit. The polypeptide is Large ribosomal subunit protein bL20 (Ralstonia nicotianae (strain ATCC BAA-1114 / GMI1000) (Ralstonia solanacearum)).